The chain runs to 196 residues: Phosphoheptose isomerase (196 aa).

The SIS domain occupies 34–192 (MVQCLLGGNK…CEIIDTTLFP (159 aa)). 49–51 (NGG) serves as a coordination point for substrate. Zn(2+)-binding residues include His58 and Gln62. Residues Gln62, 91-92 (ND), 117-119 (STS), Ser122, and Gln172 contribute to the substrate site. Gln172 and His180 together coordinate Zn(2+).

Belongs to the SIS family. GmhA subfamily. Homotetramer. It depends on Zn(2+) as a cofactor.

It localises to the cytoplasm. It catalyses the reaction 2 D-sedoheptulose 7-phosphate = D-glycero-alpha-D-manno-heptose 7-phosphate + D-glycero-beta-D-manno-heptose 7-phosphate. Its pathway is carbohydrate biosynthesis; D-glycero-D-manno-heptose 7-phosphate biosynthesis; D-glycero-alpha-D-manno-heptose 7-phosphate and D-glycero-beta-D-manno-heptose 7-phosphate from sedoheptulose 7-phosphate: step 1/1. In terms of biological role, catalyzes the isomerization of sedoheptulose 7-phosphate in D-glycero-D-manno-heptose 7-phosphate. The chain is Phosphoheptose isomerase from Colwellia psychrerythraea (strain 34H / ATCC BAA-681) (Vibrio psychroerythus).